The following is a 464-amino-acid chain: Siroheme synthase (464 aa).

The interval 1 to 203 is precorrin-2 dehydrogenase /sirohydrochlorin ferrochelatase; sequence MEFLPLFHNL…GQGAEAERML (203 aa). NAD(+)-binding positions include 22–23 and 43–44; these read EI and PE. Ser128 carries the post-translational modification Phosphoserine. The interval 216–464 is uroporphyrinogen-III C-methyltransferase; that stretch reads GEVYLVGAGP…AWFEGAQATL (249 aa). Pro225 is a binding site for S-adenosyl-L-methionine. The active-site Proton acceptor is Asp248. The active-site Proton donor is the Lys270. Residues 301–303, Ile306, 331–332, Met383, and Gly412 each bind S-adenosyl-L-methionine; these read GGD and TA.

It in the N-terminal section; belongs to the precorrin-2 dehydrogenase / sirohydrochlorin ferrochelatase family. This sequence in the C-terminal section; belongs to the precorrin methyltransferase family.

The enzyme catalyses uroporphyrinogen III + 2 S-adenosyl-L-methionine = precorrin-2 + 2 S-adenosyl-L-homocysteine + H(+). It carries out the reaction precorrin-2 + NAD(+) = sirohydrochlorin + NADH + 2 H(+). It catalyses the reaction siroheme + 2 H(+) = sirohydrochlorin + Fe(2+). It participates in cofactor biosynthesis; adenosylcobalamin biosynthesis; precorrin-2 from uroporphyrinogen III: step 1/1. It functions in the pathway cofactor biosynthesis; adenosylcobalamin biosynthesis; sirohydrochlorin from precorrin-2: step 1/1. Its pathway is porphyrin-containing compound metabolism; siroheme biosynthesis; precorrin-2 from uroporphyrinogen III: step 1/1. The protein operates within porphyrin-containing compound metabolism; siroheme biosynthesis; siroheme from sirohydrochlorin: step 1/1. It participates in porphyrin-containing compound metabolism; siroheme biosynthesis; sirohydrochlorin from precorrin-2: step 1/1. In terms of biological role, multifunctional enzyme that catalyzes the SAM-dependent methylations of uroporphyrinogen III at position C-2 and C-7 to form precorrin-2 via precorrin-1. Then it catalyzes the NAD-dependent ring dehydrogenation of precorrin-2 to yield sirohydrochlorin. Finally, it catalyzes the ferrochelation of sirohydrochlorin to yield siroheme. This chain is Siroheme synthase, found in Pseudomonas syringae pv. syringae (strain B728a).